Consider the following 580-residue polypeptide: Adenine deaminase (580 aa).

The protein belongs to the metallo-dependent hydrolases superfamily. Adenine deaminase family. Requires Mn(2+) as cofactor.

The catalysed reaction is adenine + H2O + H(+) = hypoxanthine + NH4(+). The protein is Adenine deaminase of Listeria monocytogenes serovar 1/2a (strain ATCC BAA-679 / EGD-e).